The primary structure comprises 102 residues: Monothiol glutaredoxin-S6 (102 aa).

The Glutaredoxin domain occupies 1–101 (MESVRSLVED…AMLRRAGAIW (101 aa)). Cysteine 21 provides a ligand contact to [2Fe-2S] cluster.

Belongs to the glutaredoxin family. CC-type subfamily.

It localises to the cytoplasm. Functionally, may only reduce GSH-thiol disulfides, but not protein disulfides. In Arabidopsis thaliana (Mouse-ear cress), this protein is Monothiol glutaredoxin-S6 (GRXS6).